The sequence spans 843 residues: DNA gyrase subunit A (843 aa).

In terms of domain architecture, Topo IIA-type catalytic spans 61–528 (LPDVRDGLKP…ESSTFNAEDL (468 aa)). The active-site O-(5'-phospho-DNA)-tyrosine intermediate is the tyrosine 149. The GyrA-box motif lies at 555–561 (QKRGGKG).

This sequence belongs to the type II topoisomerase GyrA/ParC subunit family. In terms of assembly, heterotetramer, composed of two GyrA and two GyrB chains. In the heterotetramer, GyrA contains the active site tyrosine that forms a transient covalent intermediate with DNA, while GyrB binds cofactors and catalyzes ATP hydrolysis.

The protein resides in the cytoplasm. It carries out the reaction ATP-dependent breakage, passage and rejoining of double-stranded DNA.. In terms of biological role, a type II topoisomerase that negatively supercoils closed circular double-stranded (ds) DNA in an ATP-dependent manner to modulate DNA topology and maintain chromosomes in an underwound state. Negative supercoiling favors strand separation, and DNA replication, transcription, recombination and repair, all of which involve strand separation. Also able to catalyze the interconversion of other topological isomers of dsDNA rings, including catenanes and knotted rings. Type II topoisomerases break and join 2 DNA strands simultaneously in an ATP-dependent manner. The polypeptide is DNA gyrase subunit A (Leptospira biflexa serovar Patoc (strain Patoc 1 / Ames)).